A 459-amino-acid polypeptide reads, in one-letter code: MKHSGFQAKRLIQLALPVLIAQVTQTMMGFIDTVMAGRVSAVDMAAVAVGTSLWLPAILFVQGLLMAFTPLFAHHNGANNQKAIQPLAFQGAYLALIGGLGVMVFLASAPLVLSHMNLEPQLYNLTIGYIDGILWGAPAFVLYQVLRGCSEGISYTLPTMVIGFVGLAVNIPANYIFIYGHFGIPAMGGAGCGIATALVFWAMLIAMAIYMQFHKKFAALAPFSQFHRPDFATMKKMTKLGLPIAMALFFEVSLFAIIALLLAPLGATVVASHQIALNFSAIVFMLPLSIGIAVSIRIGYYLGRDRADISAVVAKVGLLLALSLALSTAILTVLFRFQIAELYNSDPEVVVLAGSLMLMAALYQLSDSVQVVAAGALRGYKDTRSAFYITLFSYWGIGMSLGYTLAYTDFIVPAMGAHGFWTGLIAGLTSAALLFFIRLRYIQKHRVHLSLIEGDSVHH.

12 helical membrane passes run 12-31 (IQLA…MGFI), 46-68 (AVAV…LMAF), 89-111 (FQGA…SAPL), 121-143 (QLYN…FVLY), 155-177 (YTLP…NYIF), 187-209 (MGGA…AMAI), 244-266 (IAMA…APLG), 281-303 (AIVF…YYLG), 316-335 (VGLL…TVLF), 350-372 (VVLA…VQVV), 385-407 (SAFY…TLAY), and 417-439 (AHGF…FIRL).

This sequence belongs to the multi antimicrobial extrusion (MATE) (TC 2.A.66.1) family.

It is found in the cell inner membrane. In terms of biological role, multidrug efflux pump. The polypeptide is Probable multidrug resistance protein NorM (norM) (Shewanella oneidensis (strain ATCC 700550 / JCM 31522 / CIP 106686 / LMG 19005 / NCIMB 14063 / MR-1)).